A 228-amino-acid chain; its full sequence is Glucose-induced degradation protein 8-A homolog (228 aa).

The LisH domain occupies 25–57; the sequence is QRADMNRLIMNYLVTEGFKEAAEKFRMESGIEP. The CTLH domain occupies 63–120; it reads SLDERIKIREMVLKGQIQEAIALINSLHPELLDTNRYLYFHLQQQHLIELIRLRETEA.

Belongs to the GID8 family. As to quaternary structure, identified in the CTLH complex that contains at least MAEA, RMND5A (or alternatively its paralog RMND5B), GID8, WDR26, and RANBP9 and/or RANBP10. Interacts with CTNNB1.

Its function is as follows. Core component of the CTLH E3 ubiquitin-protein ligase complex that selectively accepts ubiquitin from UBE2H and mediates ubiquitination and subsequent proteasomal degradation of target proteins. Acts as a positive regulator of Wnt signaling pathway by promoting beta-catenin (CTNNB1) nuclear accumulation. Required for normal Wnt signaling and normal dorsoventral patterning during embryogenesis. The protein is Glucose-induced degradation protein 8-A homolog (gid8a) of Danio rerio (Zebrafish).